The sequence spans 417 residues: Serine hydroxymethyltransferase (417 aa).

(6S)-5,6,7,8-tetrahydrofolate is bound by residues Leu121 and 125–127 (GHL). The residue at position 229 (Lys229) is an N6-(pyridoxal phosphate)lysine. A (6S)-5,6,7,8-tetrahydrofolate-binding site is contributed by 355 to 357 (SPF).

Belongs to the SHMT family. In terms of assembly, homodimer. Pyridoxal 5'-phosphate is required as a cofactor.

The protein resides in the cytoplasm. It carries out the reaction (6R)-5,10-methylene-5,6,7,8-tetrahydrofolate + glycine + H2O = (6S)-5,6,7,8-tetrahydrofolate + L-serine. It functions in the pathway one-carbon metabolism; tetrahydrofolate interconversion. It participates in amino-acid biosynthesis; glycine biosynthesis; glycine from L-serine: step 1/1. In terms of biological role, catalyzes the reversible interconversion of serine and glycine with tetrahydrofolate (THF) serving as the one-carbon carrier. This reaction serves as the major source of one-carbon groups required for the biosynthesis of purines, thymidylate, methionine, and other important biomolecules. Also exhibits THF-independent aldolase activity toward beta-hydroxyamino acids, producing glycine and aldehydes, via a retro-aldol mechanism. The chain is Serine hydroxymethyltransferase from Shewanella sp. (strain W3-18-1).